Consider the following 238-residue polypeptide: ATP synthase subunit a (238 aa).

The next 5 membrane-spanning stretches (helical) occupy residues 18-38 (LTLL…VFWA), 76-96 (YSLL…LGLF), 114-134 (NLAF…IEGV), 166-186 (SLAI…GLIV), and 193-213 (VYWW…SVFI).

Belongs to the ATPase A chain family. F-type ATPases have 2 components, CF(1) - the catalytic core - and CF(0) - the membrane proton channel. CF(1) has five subunits: alpha(3), beta(3), gamma(1), delta(1), epsilon(1). CF(0) has three main subunits: a(1), b(2) and c(9-12). The alpha and beta chains form an alternating ring which encloses part of the gamma chain. CF(1) is attached to CF(0) by a central stalk formed by the gamma and epsilon chains, while a peripheral stalk is formed by the delta and b chains.

It localises to the cell membrane. Its function is as follows. Key component of the proton channel; it plays a direct role in the translocation of protons across the membrane. In Streptococcus pyogenes serotype M1, this protein is ATP synthase subunit a.